Reading from the N-terminus, the 185-residue chain is ATP-dependent protease subunit HslV (185 aa).

Threonine 13 is a catalytic residue. Positions 167, 170, and 173 each coordinate Na(+).

Belongs to the peptidase T1B family. HslV subfamily. In terms of assembly, a double ring-shaped homohexamer of HslV is capped on each side by a ring-shaped HslU homohexamer. The assembly of the HslU/HslV complex is dependent on binding of ATP.

The protein localises to the cytoplasm. The catalysed reaction is ATP-dependent cleavage of peptide bonds with broad specificity.. Its activity is regulated as follows. Allosterically activated by HslU binding. Its function is as follows. Protease subunit of a proteasome-like degradation complex believed to be a general protein degrading machinery. This is ATP-dependent protease subunit HslV from Sinorhizobium fredii (strain NBRC 101917 / NGR234).